The following is a 350-amino-acid chain: Magnesium-chelatase 38 kDa subunit (350 aa).

52-59 is an ATP binding site; it reads GDRGTGKS.

It belongs to the Mg-chelatase subunits D/I family.

It carries out the reaction protoporphyrin IX + Mg(2+) + ATP + H2O = Mg-protoporphyrin IX + ADP + phosphate + 3 H(+). Its pathway is porphyrin-containing compound metabolism; bacteriochlorophyll biosynthesis. In terms of biological role, involved in bacteriochlorophyll biosynthesis; introduces a magnesium ion into protoporphyrin IX to yield Mg-protoporphyrin IX. This Rhodobacter capsulatus (strain ATCC BAA-309 / NBRC 16581 / SB1003) protein is Magnesium-chelatase 38 kDa subunit (bchI).